The chain runs to 348 residues: Centromere protein N-B (348 aa).

It belongs to the CENP-N/CHL4 family.

The protein resides in the nucleus. It is found in the chromosome. Its subcellular location is the centromere. Its function is as follows. Probable component of a centromeric complex involved in assembly of kinetochore proteins, mitotic progression and chromosome segregation. The protein is Centromere protein N-B (cenpn-b) of Xenopus laevis (African clawed frog).